A 399-amino-acid chain; its full sequence is Pyridinium-3,5-bisthiocarboxylic acid mononucleotide nickel insertion protein (399 aa).

This sequence belongs to the LarC family.

It catalyses the reaction Ni(II)-pyridinium-3,5-bisthiocarboxylate mononucleotide = pyridinium-3,5-bisthiocarboxylate mononucleotide + Ni(2+). Its function is as follows. Involved in the biosynthesis of a nickel-pincer cofactor ((SCS)Ni(II) pincer complex). Binds Ni(2+), and functions in nickel delivery to pyridinium-3,5-bisthiocarboxylic acid mononucleotide (P2TMN), to form the mature cofactor. Is thus probably required for the activation of nickel-pincer cofactor-dependent enzymes. This is Pyridinium-3,5-bisthiocarboxylic acid mononucleotide nickel insertion protein from Clostridium kluyveri (strain ATCC 8527 / DSM 555 / NBRC 12016 / NCIMB 10680 / K1).